The primary structure comprises 504 residues: uncharacterized protein (504 aa).

3 helical membrane-spanning segments follow: residues 146–166, 196–216, and 330–350; these read TSAGYAKIVGCALGFPVINIA, SSAAILITGAGAIGTALADVL, and SMALTMALLAAAVLYASVAVA. 372 to 492 lines the a nucleoside 3',5'-cyclic phosphate pocket; sequence FLNIDVPLQA…EIAYGVARTR (121 aa).

Its subcellular location is the cell membrane. This is an uncharacterized protein from Mycobacterium tuberculosis (strain CDC 1551 / Oshkosh).